The chain runs to 481 residues: (S)-N-methylcoclaurine 3'-hydroxylase isozyme 1 (481 aa).

Residue C423 participates in heme binding.

Belongs to the cytochrome P450 family. Heme serves as cofactor. In terms of tissue distribution, restricted to the parietal region of sieve elements adjacent or proximal to laticifers in roots, stems, leaves, carpels and hypocotyls.

The protein resides in the endoplasmic reticulum. The catalysed reaction is (S)-N-methylcoclaurine + reduced [NADPH--hemoprotein reductase] + O2 = (S)-3'-hydroxy-N-methylcoclaurine + oxidized [NADPH--hemoprotein reductase] + H2O + H(+). Its pathway is alkaloid biosynthesis; (S)-reticuline biosynthesis; (S)-reticuline from (S)-norcoclaurine: step 3/4. Cytochrome P450 monooxygenase involved in the biosynthesis of benzylisoquinoline alkaloids. Catalyzes the 3'-hydroxylation of (S)-N-methylcoclaurine. The chain is (S)-N-methylcoclaurine 3'-hydroxylase isozyme 1 from Papaver somniferum (Opium poppy).